Reading from the N-terminus, the 501-residue chain is Lysine--tRNA ligase (501 aa).

The Mg(2+) site is built by Glu-412 and Glu-419.

This sequence belongs to the class-II aminoacyl-tRNA synthetase family. As to quaternary structure, homodimer. The cofactor is Mg(2+).

It is found in the cytoplasm. It carries out the reaction tRNA(Lys) + L-lysine + ATP = L-lysyl-tRNA(Lys) + AMP + diphosphate. This Pasteurella multocida (strain Pm70) protein is Lysine--tRNA ligase (lysS).